Here is a 432-residue protein sequence, read N- to C-terminus: Glutamyl-tRNA reductase (432 aa).

Residues 49–52 (TCNR), serine 109, 114–116 (EGQ), and glutamine 120 each bind substrate. Cysteine 50 (nucleophile) is an active-site residue. An NADP(+)-binding site is contributed by 198-203 (GAGRMS).

This sequence belongs to the glutamyl-tRNA reductase family. In terms of assembly, homodimer.

The catalysed reaction is (S)-4-amino-5-oxopentanoate + tRNA(Glu) + NADP(+) = L-glutamyl-tRNA(Glu) + NADPH + H(+). It functions in the pathway porphyrin-containing compound metabolism; protoporphyrin-IX biosynthesis; 5-aminolevulinate from L-glutamyl-tRNA(Glu): step 1/2. Its pathway is porphyrin-containing compound metabolism; chlorophyll biosynthesis. Catalyzes the NADPH-dependent reduction of glutamyl-tRNA(Glu) to glutamate 1-semialdehyde (GSA). This chain is Glutamyl-tRNA reductase, found in Parasynechococcus marenigrum (strain WH8102).